Consider the following 298-residue polypeptide: Homoserine kinase (298 aa).

83–93 (PISRGLGSSSS) serves as a coordination point for ATP.

Belongs to the GHMP kinase family. Homoserine kinase subfamily.

It is found in the cytoplasm. It catalyses the reaction L-homoserine + ATP = O-phospho-L-homoserine + ADP + H(+). It participates in amino-acid biosynthesis; L-threonine biosynthesis; L-threonine from L-aspartate: step 4/5. Functionally, catalyzes the ATP-dependent phosphorylation of L-homoserine to L-homoserine phosphate. The protein is Homoserine kinase of Clostridium botulinum (strain Alaska E43 / Type E3).